The chain runs to 488 residues: MTRALMIQGTGSDVGKSLLVAGLARAFTRRGLRVRPFKPQNMSNNAAVTADGGEIGRAQALQARAARVAPSVHMNPVLLKPQSEVGAQVVVQGRMIGTARARDYQAWKPRLMESVLDSFERLRADSDLVLVEGAGSPAEVNLRRGDIANMGFARATDTPVVIVGDIDRGGVIASLVGTQAVMEPDDAAMIRGFIVNRFRGDPTLFADGMALIAERTGWTPFGLVPFFPEAGRLPPEDAVALDVAGAGRDGSVPLIAVLRFPHIANFDDLDPLRQEPGVSVAFVPAGEPIPAEADLIVLPGSKTTIDDLDFLRAQGWDIDIRAHLRRGRRVLGLCGGYQMLGRAIADPQGIEGAPRALPGLGLLDVETVMTAEKRLVAVTGTTLADDEPFSGYEMHVGDTTGPDAAHPLLRFADGRADGAVSADGLVAGTYVHGLFANDRQRAAWLARLGAAPGLTNYEAGIEAVLDRFADHLEAHLDCDGLLRLCRPL.

The GATase cobBQ-type domain occupies 252-440; it reads VPLIAVLRFP…VHGLFANDRQ (189 aa). Residue C334 is the Nucleophile of the active site. The active site involves H432.

Belongs to the CobB/CobQ family. CobQ subfamily.

It functions in the pathway cofactor biosynthesis; adenosylcobalamin biosynthesis. Functionally, catalyzes amidations at positions B, D, E, and G on adenosylcobyrinic A,C-diamide. NH(2) groups are provided by glutamine, and one molecule of ATP is hydrogenolyzed for each amidation. This Methylorubrum populi (strain ATCC BAA-705 / NCIMB 13946 / BJ001) (Methylobacterium populi) protein is Cobyric acid synthase.